We begin with the raw amino-acid sequence, 105 residues long: Molt-inhibiting hormone (105 aa).

The first 28 residues, 1-28 (MYRLAMRTWLAIVIVVVGTSLLFDTASA), serve as a signal peptide directing secretion. Intrachain disulfides connect Cys35–Cys72, Cys52–Cys68, and Cys55–Cys81.

Belongs to the arthropod CHH/MIH/GIH/VIH hormone family. Produced by the medulla terminalis X-organ in the eyestalks and transported to the sinus gland where it is stored and released.

The protein localises to the secreted. Its function is as follows. Inhibits Y-organs where molting hormone (ecdysteroid) is secreted. A molting cycle is initiated when MIH secretion diminishes or stops. Has little or no hyperglycemic activity. The protein is Molt-inhibiting hormone of Penaeus japonicus (Kuruma prawn).